Here is a 187-residue protein sequence, read N- to C-terminus: Peptidyl-tRNA hydrolase (187 aa).

Y18 lines the tRNA pocket. Catalysis depends on H23, which acts as the Proton acceptor. Residues F65, N67, and N113 each coordinate tRNA.

Belongs to the PTH family. In terms of assembly, monomer.

Its subcellular location is the cytoplasm. The catalysed reaction is an N-acyl-L-alpha-aminoacyl-tRNA + H2O = an N-acyl-L-amino acid + a tRNA + H(+). Its function is as follows. Hydrolyzes ribosome-free peptidyl-tRNAs (with 1 or more amino acids incorporated), which drop off the ribosome during protein synthesis, or as a result of ribosome stalling. In terms of biological role, catalyzes the release of premature peptidyl moieties from peptidyl-tRNA molecules trapped in stalled 50S ribosomal subunits, and thus maintains levels of free tRNAs and 50S ribosomes. The protein is Peptidyl-tRNA hydrolase of Coxiella burnetii (strain RSA 331 / Henzerling II).